We begin with the raw amino-acid sequence, 481 residues long: Cysteine--tRNA ligase (481 aa).

Zn(2+) is bound at residue C27. The 'HIGH' region signature appears at 29–39 (PTVYNYAHIGN). Zn(2+)-binding residues include C222, H247, and E251. Positions 279–283 (KMSKS) match the 'KMSKS' region motif. K282 is a binding site for ATP.

It belongs to the class-I aminoacyl-tRNA synthetase family. Monomer. Requires Zn(2+) as cofactor.

The protein resides in the cytoplasm. The enzyme catalyses tRNA(Cys) + L-cysteine + ATP = L-cysteinyl-tRNA(Cys) + AMP + diphosphate. This chain is Cysteine--tRNA ligase, found in Borrelia hermsii (strain HS1 / DAH).